The primary structure comprises 103 residues: uncharacterized protein (103 aa).

Residues 33–57 (GYVAAIVAGPVSMSPLDWICPLLAI) traverse the membrane as a helical segment.

It localises to the membrane. This is an uncharacterized protein from Sinorhizobium fredii (strain NBRC 101917 / NGR234).